The primary structure comprises 352 residues: Histidine biosynthesis bifunctional protein HisB (352 aa).

Positions 1–164 are histidinol-phosphatase; it reads MSQKILFIDR…EIENEILSSF (164 aa). The active-site Nucleophile is aspartate 9. Aspartate 9 and aspartate 11 together coordinate Mg(2+). Aspartate 11 serves as the catalytic Proton donor. Zn(2+)-binding residues include cysteine 93, histidine 95, cysteine 101, and cysteine 103. Position 130 (aspartate 130) interacts with Mg(2+). An imidazoleglycerol-phosphate dehydratase region spans residues 165–352; that stretch reads RSASYQRTTK…ENLASSKGVI (188 aa).

The protein in the N-terminal section; belongs to the histidinol-phosphatase family. This sequence in the C-terminal section; belongs to the imidazoleglycerol-phosphate dehydratase family. Requires Mg(2+) as cofactor. Zn(2+) is required as a cofactor.

The protein localises to the cytoplasm. It catalyses the reaction D-erythro-1-(imidazol-4-yl)glycerol 3-phosphate = 3-(imidazol-4-yl)-2-oxopropyl phosphate + H2O. It carries out the reaction L-histidinol phosphate + H2O = L-histidinol + phosphate. Its pathway is amino-acid biosynthesis; L-histidine biosynthesis; L-histidine from 5-phospho-alpha-D-ribose 1-diphosphate: step 6/9. It participates in amino-acid biosynthesis; L-histidine biosynthesis; L-histidine from 5-phospho-alpha-D-ribose 1-diphosphate: step 8/9. This Campylobacter jejuni subsp. jejuni serotype O:2 (strain ATCC 700819 / NCTC 11168) protein is Histidine biosynthesis bifunctional protein HisB.